Consider the following 134-residue polypeptide: Large ribosomal subunit protein eL14y (134 aa).

Belongs to the eukaryotic ribosomal protein eL14 family.

The sequence is that of Large ribosomal subunit protein eL14y (RPL14B) from Arabidopsis thaliana (Mouse-ear cress).